We begin with the raw amino-acid sequence, 551 residues long: Glucans biosynthesis protein D (551 aa).

Residues 1 to 32 (MDRRRFIKGSMAMAAVCGTSGIASLFSQAAFA) constitute a signal peptide (tat-type signal).

Belongs to the OpgD/OpgG family. Post-translationally, predicted to be exported by the Tat system. The position of the signal peptide cleavage has not been experimentally proven.

It is found in the periplasm. It functions in the pathway glycan metabolism; osmoregulated periplasmic glucan (OPG) biosynthesis. In terms of biological role, probably involved in the control of the structural glucose backbone of osmoregulated periplasmic glucans (OPGs). This is Glucans biosynthesis protein D (mdoD) from Shigella flexneri.